Consider the following 258-residue polypeptide: Probable N-acetylglucosaminyl-phosphatidylinositol de-N-acetylase (258 aa).

The disordered stretch occupies residues 147-170 (KSSSTTTTSTTSSSSSSSSLSNRT). The segment covering 148–170 (SSSTTTTSTTSSSSSSSSLSNRT) has biased composition (low complexity).

It belongs to the PIGL family.

It localises to the endoplasmic reticulum membrane. The catalysed reaction is a 6-(N-acetyl-alpha-D-glucosaminyl)-1-(1,2-diacyl-sn-glycero-3-phospho)-1D-myo-inositol + H2O = a 6-(alpha-D-glucosaminyl)-1-(1,2-diacyl-sn-glycero-3-phospho)-1D-myo-inositol + acetate. Its pathway is glycolipid biosynthesis; glycosylphosphatidylinositol-anchor biosynthesis. Involved in the second step of GPI biosynthesis. De-N-acetylation of N-acetylglucosaminyl-phosphatidylinositol. This is Probable N-acetylglucosaminyl-phosphatidylinositol de-N-acetylase (pigl) from Dictyostelium discoideum (Social amoeba).